The primary structure comprises 309 residues: MDLIILVGIASALLVVILTIFFLQKKKGGTEAKEAAAPPQRGVPLRAQEGVPRRAQIARNQRNRLRQNAPAAAPAAAAALQAADAEGDNDDENPDGDGQRMPQGAVLDEKMGAKKRAKMEAKEQKRLHREQELIDREQRKVKEAKEEAERKQQEDFQEEADRKRAEAERLVKEERERKEHEEYLKMKAGFSVEEEGFEEGDADDQDNLLADFIQYIKDNKVVLLEDLAVAFKLKTQQAIERIQDLQANGTLTGVIDDRGKFIYVSEEELAAVAKFIKQRGRVSIVELAESSNNLINLTPVSAGAGEGSS.

Residues 1–2 (MD) are Lumenal-facing. The chain crosses the membrane as a helical span at residues 3 to 23 (LIILVGIASALLVVILTIFFL). The Cytoplasmic segment spans residues 24–309 (QKKKGGTEAK…VSAGAGEGSS (286 aa)). Residues 30–178 (TEAKEAAAPP…RLVKEERERK (149 aa)) are disordered. Residues 53-84 (RRAQIARNQRNRLRQNAPAAAPAAAAALQAAD) are compositionally biased toward low complexity. Over residues 85 to 95 (AEGDNDDENPD) the composition is skewed to acidic residues. Residues 107-178 (LDEKMGAKKR…RLVKEERERK (72 aa)) show a composition bias toward basic and acidic residues.

It belongs to the DDRGK1 family. In terms of assembly, interacts with Atg9; the interaction is transient.

Its subcellular location is the endoplasmic reticulum membrane. Its function is as follows. Substrate adapter for ufmylation, the covalent attachment of the ubiquitin-like modifier UFM1 to substrate proteins. Required for ufmylation of Atg9; protects the nervous system during aging, possibly by stabilizing Atg9 and supporting its function. The chain is DDRGK domain-containing protein 1 from Drosophila persimilis (Fruit fly).